The primary structure comprises 26 residues: Acyl carrier protein (26 aa).

Positions 2–26 (SDTATRVQKIVVEHLGVESDKVTQE) constitute a Carrier domain.

It belongs to the acyl carrier protein (ACP) family. 4'-phosphopantetheine is transferred from CoA to a specific serine of apo-ACP by AcpS. This modification is essential for activity because fatty acids are bound in thioester linkage to the sulfhydryl of the prosthetic group.

The protein resides in the cytoplasm. It participates in lipid metabolism; fatty acid biosynthesis. Carrier of the growing fatty acid chain in fatty acid biosynthesis. In Erythrobacter longus, this protein is Acyl carrier protein (acpP).